Reading from the N-terminus, the 110-residue chain is Light-harvesting complex-like protein OHP1, chloroplastic (110 aa).

Residues 1 to 41 (MSSSPLSSSLFHPLSTLSTHCHGRRQNLCFNRKQQPFVVRA) constitute a chloroplast transit peptide. Topologically, residues 42–74 (AKLPEGVIVPKAQPKSQPAFLGFTQTAEIWNSR) are stromal. Residues 75–95 (ACMIGLIGTFIVELILNKGIL) form a helical membrane-spanning segment. The Lumenal segment spans residues 96-110 (ELIGVEIGKGLDLPL).

This sequence belongs to the ELIP/psbS family. May bind chlorophyll and form dimers in the thylakoid membrane. Component of a high molecular weight complex containing OHP1, OHP2 and HCF244, and PSII core proteins D1/D2, HCF136 and HCF173. Interacts with HCF244. Forms a trimeric complex with OHP2 and HCF244 that mutually stabilizes each subunit. As to expression, mostly expressed in cotyledons and shoot apices.

Its subcellular location is the plastid. The protein localises to the chloroplast thylakoid membrane. Functionally, may play a photoprotective role in the thylakoid membrane in response to light stress. Involved in photosystems I (PSI) and II (PSII) core proteins function. Forms a trimeric complex with OHP2 and HCF244 that is required to promote PSII core subunit assembly. The trimeric complex forms a transient PSII reaction center-like complex with PsbA, PsbD, PsbE, PsbF and PsbI subunits in thylakoids for early assembly of PSII as well as PSII repair. The trimeric complex is required for the recruitment of ribosomes to the psbA mRNA during PSII biogenesis and repair. Forms a heterodimer with OHP1 that binds chlorophylls and carotenoids, and that may function in the delivery of pigments to the PsbA subunit of PSII. In Arabidopsis thaliana (Mouse-ear cress), this protein is Light-harvesting complex-like protein OHP1, chloroplastic.